Here is a 502-residue protein sequence, read N- to C-terminus: Glycerol kinase (502 aa).

T14 contacts ADP. 3 residues coordinate ATP: T14, T15, and S16. Residue T14 participates in sn-glycerol 3-phosphate binding. R18 lines the ADP pocket. Sn-glycerol 3-phosphate contacts are provided by R84, E85, Y136, and D246. Residues R84, E85, Y136, D246, and Q247 each coordinate glycerol. Residues T268 and G311 each contribute to the ADP site. T268, G311, Q315, and G412 together coordinate ATP. G412 and N416 together coordinate ADP.

This sequence belongs to the FGGY kinase family. As to quaternary structure, homotetramer and homodimer (in equilibrium). Heterodimer with EIIA-Glc. Binds 1 zinc ion per glycerol kinase EIIA-Glc dimer. The zinc ion is important for dimerization.

The catalysed reaction is glycerol + ATP = sn-glycerol 3-phosphate + ADP + H(+). It participates in polyol metabolism; glycerol degradation via glycerol kinase pathway; sn-glycerol 3-phosphate from glycerol: step 1/1. Activity of this regulatory enzyme is affected by several metabolites. Allosterically and non-competitively inhibited by fructose 1,6-bisphosphate (FBP) and unphosphorylated phosphocarrier protein EIIA-Glc (III-Glc), an integral component of the bacterial phosphotransferase (PTS) system. In terms of biological role, key enzyme in the regulation of glycerol uptake and metabolism. Catalyzes the phosphorylation of glycerol to yield sn-glycerol 3-phosphate. The protein is Glycerol kinase of Salmonella agona (strain SL483).